A 114-amino-acid polypeptide reads, in one-letter code: MAVIQFIKGINETVVADVSLTRSRDGSKGTATFRFNNPDILKSGMEDKGDITGMYLKDDEGELMTRDVSAKFINGKPQAVEAIYIIKSPQEWDRFMRFMEKYANENKLSFTKAK.

Belongs to the Psb28 family. As to quaternary structure, part of the photosystem II complex.

The protein resides in the plastid. It localises to the chloroplast thylakoid membrane. This is Photosystem II reaction center Psb28 protein from Gracilaria tenuistipitata var. liui (Red alga).